The following is a 445-amino-acid chain: MERAPPDGLMNASGALAGEAAAAGGARGFSAAWTAVLAALMALLIVATVLGNALVMLAFVADSSLRTQNNFFLLNLAISDFLVGAFCIPLYVPYVLTGRWTFGRGLCKLWLVVDYLLCASSVFNIVLISYDRFLSVTRAVSYRAQQGDTRRAVRKMALVWVLAFLLYGPAILSWEYLSGGSSIPEGHCYAEFFYNWYFLITASTLEFFTPFLSVTFFNLSIYLNIQRRTRLRLDGGREAGPEPPPDAQPSPPPAPPSCWGCWPKGHGEAMPLHRYGVGEAGPGVETGEAGLGGGSGGGAAASPTSSSGSSSRGTERPRSLKRGSKPSASSASLEKRMKMVSQSITQRFRLSRDKKVAKSLAIIVSIFGLCWAPYTLLMIIRAACHGHCVPDYWYETSFWLLWANSAVNPVLYPLCHYSFRRAFTKLLCPQKLKVQPHGSLEQCWK.

The Extracellular portion of the chain corresponds to 1–39 (MERAPPDGLMNASGALAGEAAAAGGARGFSAAWTAVLAA). Asn-11 carries N-linked (GlcNAc...) asparagine glycosylation. A helical transmembrane segment spans residues 40–60 (LMALLIVATVLGNALVMLAFV). Over 61-70 (ADSSLRTQNN) the chain is Cytoplasmic. Residues 71–91 (FFLLNLAISDFLVGAFCIPLY) traverse the membrane as a helical segment. Over 92 to 108 (VPYVLTGRWTFGRGLCK) the chain is Extracellular. Cys-107 and Cys-188 are joined by a disulfide. The chain crosses the membrane as a helical span at residues 109-129 (LWLVVDYLLCASSVFNIVLIS). Over 130–156 (YDRFLSVTRAVSYRAQQGDTRRAVRKM) the chain is Cytoplasmic. The chain crosses the membrane as a helical span at residues 157-177 (ALVWVLAFLLYGPAILSWEYL). Residues 178 to 196 (SGGSSIPEGHCYAEFFYNW) are Extracellular-facing. A helical transmembrane segment spans residues 197-217 (YFLITASTLEFFTPFLSVTFF). Residues 218–359 (NLSIYLNIQR…LSRDKKVAKS (142 aa)) lie on the Cytoplasmic side of the membrane. 2 disordered regions span residues 234-259 (DGGR…PSCW) and 273-336 (HRYG…LEKR). A compositionally biased stretch (pro residues) spans 241 to 256 (PEPPPDAQPSPPPAPP). Positions 289–299 (AGLGGGSGGGA) are enriched in gly residues. Residues 300–312 (AASPTSSSGSSSR) show a composition bias toward low complexity. A helical membrane pass occupies residues 360–380 (LAIIVSIFGLCWAPYTLLMII). At 381 to 396 (RAACHGHCVPDYWYET) the chain is on the extracellular side. The helical transmembrane segment at 397-417 (SFWLLWANSAVNPVLYPLCHY) threads the bilayer. Residues 418 to 445 (SFRRAFTKLLCPQKLKVQPHGSLEQCWK) lie on the Cytoplasmic side of the membrane. The residue at position 439 (Ser-439) is a Phosphoserine.

This sequence belongs to the G-protein coupled receptor 1 family.

Its subcellular location is the cell membrane. Its function is as follows. The H3 subclass of histamine receptors could mediate the histamine signals in CNS and peripheral nervous system. Signals through the inhibition of adenylate cyclase and displays high constitutive activity (spontaneous activity in the absence of agonist). The sequence is that of Histamine H3 receptor (Hrh3) from Mus musculus (Mouse).